Here is a 386-residue protein sequence, read N- to C-terminus: EARP and GARP complex-interacting protein 1 (386 aa).

Position 1 is an N-acetylmethionine (Met1). WD repeat units follow at residues 132 to 172, 182 to 222, 226 to 266, and 270 to 310; these read GAQG…SQAV, RGQL…QIYC, AHGQ…EPVK, and EHSH…SEPF. Residues 312 to 332 form a disordered region; the sequence is HLVDDDDVSDPEEHHTEKSKE. Residue Ser320 is modified to Phosphoserine. Basic and acidic residues predominate over residues 322-332; it reads PEEHHTEKSKE. A WD 5 repeat occupies 344-384; it reads EHEDSVYAVDWASADPWLFASLSYDGRLVINRVPRALKYHI.

The protein belongs to the WD repeat EIPR1 family. Interacts with two multisubunit tethering complexes: EARP composed of VPS50, VPS51, VPS52 and VPS53 subunits and GARP complex composed of VPS51, VPS52, VPS53 and VPS54 subunits. Interacts with SNAP29. As to expression, ubiquitous. Highly expressed in brain, adipose tissue, spleen and kidney (at protein level).

The protein localises to the golgi apparatus. The protein resides in the trans-Golgi network. In terms of biological role, acts as a component of endosomal retrieval machinery that is involved in protein transport from early endosomes to either recycling endosomes or the trans-Golgi network. Mediates the recruitment of Golgi-associated retrograde protein (GARP) complex to the trans-Golgi network and controls early endosome-to-Golgi transport of internalized protein. Promotes the recycling of internalized transferrin receptor (TFRC) to the plasma membrane through interaction with endosome-associated recycling protein (EARP) complex. Controls proper insulin distribution and secretion, and retention of cargo in mature dense core vesicles. Required for the stability of the endosome-associated retrograde protein (EARP) complex subunits and for proper localization and association of EARP with membranes. The protein is EARP and GARP complex-interacting protein 1 of Rattus norvegicus (Rat).